Consider the following 346-residue polypeptide: Holliday junction branch migration complex subunit RuvB (346 aa).

The segment covering 1 to 11 (MTEQRTIASSA) has biased composition (polar residues). Residues 1–20 (MTEQRTIASSATREDEAADA) form a disordered region. The large ATPase domain (RuvB-L) stretch occupies residues 1-183 (MTEQRTIASS…FGIVQRLEFY (183 aa)). ATP-binding positions include Ile-22, Arg-23, Gly-64, Lys-67, Thr-68, Thr-69, 130–132 (EDF), Arg-173, Tyr-183, and Arg-220. Residue Thr-68 participates in Mg(2+) binding. Residues 184–254 (SPQELTRIVI…VAQAAMQMLK (71 aa)) are small ATPAse domain (RuvB-S). The segment at 257–346 (PEGFDELDRR…PAIGEPGDLF (90 aa)) is head domain (RuvB-H). Positions 293, 312, and 317 each coordinate DNA.

This sequence belongs to the RuvB family. In terms of assembly, homohexamer. Forms an RuvA(8)-RuvB(12)-Holliday junction (HJ) complex. HJ DNA is sandwiched between 2 RuvA tetramers; dsDNA enters through RuvA and exits via RuvB. An RuvB hexamer assembles on each DNA strand where it exits the tetramer. Each RuvB hexamer is contacted by two RuvA subunits (via domain III) on 2 adjacent RuvB subunits; this complex drives branch migration. In the full resolvosome a probable DNA-RuvA(4)-RuvB(12)-RuvC(2) complex forms which resolves the HJ.

It localises to the cytoplasm. It catalyses the reaction ATP + H2O = ADP + phosphate + H(+). Functionally, the RuvA-RuvB-RuvC complex processes Holliday junction (HJ) DNA during genetic recombination and DNA repair, while the RuvA-RuvB complex plays an important role in the rescue of blocked DNA replication forks via replication fork reversal (RFR). RuvA specifically binds to HJ cruciform DNA, conferring on it an open structure. The RuvB hexamer acts as an ATP-dependent pump, pulling dsDNA into and through the RuvAB complex. RuvB forms 2 homohexamers on either side of HJ DNA bound by 1 or 2 RuvA tetramers; 4 subunits per hexamer contact DNA at a time. Coordinated motions by a converter formed by DNA-disengaged RuvB subunits stimulates ATP hydrolysis and nucleotide exchange. Immobilization of the converter enables RuvB to convert the ATP-contained energy into a lever motion, pulling 2 nucleotides of DNA out of the RuvA tetramer per ATP hydrolyzed, thus driving DNA branch migration. The RuvB motors rotate together with the DNA substrate, which together with the progressing nucleotide cycle form the mechanistic basis for DNA recombination by continuous HJ branch migration. Branch migration allows RuvC to scan DNA until it finds its consensus sequence, where it cleaves and resolves cruciform DNA. In Xanthomonas campestris pv. campestris (strain ATCC 33913 / DSM 3586 / NCPPB 528 / LMG 568 / P 25), this protein is Holliday junction branch migration complex subunit RuvB.